The chain runs to 163 residues: Protein GOLVEN 3 (163 aa).

The first 20 residues, 1 to 20, serve as a signal peptide directing secretion; sequence MMRFTIIVIAFLLIIQSLEE. Residues 21–141 constitute a propeptide that is removed on maturation; that stretch reads EHILVYAHEG…MEKLARLLRD (121 aa). Position 143 is a sulfotyrosine (tyrosine 143). The disordered stretch occupies residues 144 to 163; that stretch reads PIYSKPRRKPPVNNRAPDKF. At proline 154 the chain carries Hydroxyproline. Positions 158-163 are excised as a propeptide; that stretch reads RAPDKF.

It belongs to the RGF family. In terms of assembly, binds to LRR receptor-like serine/threonine-protein kinases RGI1, RGI2 and RGI3 to trigger their dimerization with SERK proteins and subsequent signaling. In terms of tissue distribution, expressed in roots, specifically in the root apical meristem (RAM).

It is found in the secreted. Functionally, signaling peptide (root growth factor) required during root gravitropism in a PIN2-traffic dependent manner, thus influencing the formation of auxin gradients. Maintains the postembryonic root stem cell niche. The sequence is that of Protein GOLVEN 3 from Arabidopsis thaliana (Mouse-ear cress).